The following is a 433-amino-acid chain: Oxidoreductase acuF (433 aa).

It functions in the pathway secondary metabolite biosynthesis. In terms of biological role, oxidoreductase; part of the gene cluster that mediates the biosynthesis of aculins. The pathway begins with the synthesis of 6-methylsalicylic acid by the polyketide synthase (PKS) acuA via condensation of acetate and malonate units. The 6-methylsalicylic acid decarboxylase acuB then catalyzes the decarboxylation of 6-methylsalicylic acid to yield m-cresol (also known as 3-methylphenol). These first reactions occur in the cytosol. The intermediate m-cresol is then transported into the endoplasmic reticulum where the cytochrome P450 monooxygenase acuC converts it to m-hydroxybenzyl alcohol, which is further converted to gentisyl alcohol by the cytochrome P450 monooxygenase acuD. Gentisyl alcohol is further oxidized by the oxidoreductase acuE that probably catalyzes hydroxylation of the aromatic ring. The aromatic system might then be opened by oxidation through a Baeyer-Villiger type of oxidation, which could be catalyzed by acuF, with the carboxylic acid at C-1 subsequently reduced to an aldehyde by acuG. Subsequently, a hemiacetal is formed, before the dehydrogenase acuH would reduce the double bond between C-4 and C-6. Finally, keto-enol tautomerism results in formation of aculinic acid, which exists as two diastereomers (both R/S configurations at C-1) by non-enzymatic hemiacetal formation. The carboxypeptidase acuI could be involved in the linking of aculinic acid to an aculene A moiety produced by the aculene biosynthesis cluster and which leads to the production of aculin A. AcuI may also be involved in the attachment of proline to aculinic acid to form epi-aculins A and B. In Aspergillus aculeatus (strain ATCC 16872 / CBS 172.66 / WB 5094), this protein is Oxidoreductase acuF.